A 318-amino-acid polypeptide reads, in one-letter code: Aspartate carbamoyltransferase catalytic subunit (318 aa).

Residues arginine 54 and threonine 55 each coordinate carbamoyl phosphate. Residue lysine 82 participates in L-aspartate binding. Carbamoyl phosphate-binding residues include arginine 104, histidine 134, and glutamine 137. L-aspartate contacts are provided by arginine 174 and arginine 230. Carbamoyl phosphate-binding residues include glycine 271 and proline 272.

It belongs to the aspartate/ornithine carbamoyltransferase superfamily. ATCase family. In terms of assembly, heterododecamer (2C3:3R2) of six catalytic PyrB chains organized as two trimers (C3), and six regulatory PyrI chains organized as three dimers (R2).

It catalyses the reaction carbamoyl phosphate + L-aspartate = N-carbamoyl-L-aspartate + phosphate + H(+). The protein operates within pyrimidine metabolism; UMP biosynthesis via de novo pathway; (S)-dihydroorotate from bicarbonate: step 2/3. Its function is as follows. Catalyzes the condensation of carbamoyl phosphate and aspartate to form carbamoyl aspartate and inorganic phosphate, the committed step in the de novo pyrimidine nucleotide biosynthesis pathway. This chain is Aspartate carbamoyltransferase catalytic subunit, found in Clavibacter sepedonicus (Clavibacter michiganensis subsp. sepedonicus).